We begin with the raw amino-acid sequence, 591 residues long: MAERTHACGKVTVEAVGQTVQLKGWVQKRRDLGGLIFIDLRDRTGIVQVVFNPETSKEALEVAETIRSEYVLHVEGTVVERGEGAINDNMATGRIEVQATKVNVLNAAKTTPIIIADDTDASEDVRLKYRYLDLRRPVMFNTFKMRHDVTKTIRNFLDTEEFLEVETPILTKSTPEGARDYLVPSRVHDGEFYALPQSPQLFKQLLMVGGFERYYQVARCFRDEDLRADRQPEFTQIDIEASFLTQEEILDMMERMMTKVMKDAKGVEISAPFPRMTYADAMARYGSDKPDTRFEMELTDLSEFAAGCGFKVFTSAVESGGQVKAINAKGAASKYSRKDIDALTEFVKVYGAKGLAWLKVEEDGLKGPIAKFFGEEDANVLMNTLEATAGDLLLFVADKKSVVADSLGALRLRLGKELELIDESKFNFLWVTDWPLLEYDEDADRYFAAHHPFTMPFREDVELLETAPEKARAQAYDLVLNGYELGGGSLRIYERDVQEKMFKALGFSQEEAQEQFGFLLEAFEYGTPPHGGIALGLDRLVMLLAGRTNLRDTIAFPKTASASCLLTEAPSPVAEAQLEELNLKLSLKEEK.

Glu-176 provides a ligand contact to L-aspartate. Residues Gln-200–Lys-203 are aspartate. Position 222 (Arg-222) interacts with L-aspartate. ATP contacts are provided by residues Arg-222–Glu-224 and Gln-231. His-450 is a binding site for L-aspartate. Residue Glu-484 participates in ATP binding. Arg-491 contacts L-aspartate. Gly-536 to Arg-539 provides a ligand contact to ATP.

The protein belongs to the class-II aminoacyl-tRNA synthetase family. Type 1 subfamily. Homodimer.

The protein localises to the cytoplasm. It carries out the reaction tRNA(Asx) + L-aspartate + ATP = L-aspartyl-tRNA(Asx) + AMP + diphosphate. Functionally, aspartyl-tRNA synthetase with relaxed tRNA specificity since it is able to aspartylate not only its cognate tRNA(Asp) but also tRNA(Asn). Reaction proceeds in two steps: L-aspartate is first activated by ATP to form Asp-AMP and then transferred to the acceptor end of tRNA(Asp/Asn). This Bacillus cereus (strain AH187) protein is Aspartate--tRNA(Asp/Asn) ligase.